The sequence spans 412 residues: UV DNA damage endonuclease (412 aa).

Belongs to the uve1/UvsE family.

Its function is as follows. Component in a DNA repair pathway. Removal of UV LIGHT damaged nucleotides. Recognizes pyrimidine dimers and cleave a phosphodiester bond immediately 5' to the lesion. The sequence is that of UV DNA damage endonuclease from Clostridium perfringens (strain 13 / Type A).